Here is a 377-residue protein sequence, read N- to C-terminus: UPF0754 membrane protein RBAM_010020 (377 aa).

2 helical membrane-spanning segments follow: residues 1 to 21 (MGIA…GAVT) and 357 to 377 (YLGG…VILF).

The protein belongs to the UPF0754 family.

The protein resides in the cell membrane. This is UPF0754 membrane protein RBAM_010020 from Bacillus velezensis (strain DSM 23117 / BGSC 10A6 / LMG 26770 / FZB42) (Bacillus amyloliquefaciens subsp. plantarum).